Reading from the N-terminus, the 305-residue chain is tRNA pseudouridine synthase B (305 aa).

The active-site Nucleophile is the Asp-48.

Belongs to the pseudouridine synthase TruB family. Type 1 subfamily.

The enzyme catalyses uridine(55) in tRNA = pseudouridine(55) in tRNA. In terms of biological role, responsible for synthesis of pseudouridine from uracil-55 in the psi GC loop of transfer RNAs. The chain is tRNA pseudouridine synthase B from Pseudomonas putida (strain ATCC 700007 / DSM 6899 / JCM 31910 / BCRC 17059 / LMG 24140 / F1).